The chain runs to 393 residues: MLPDKKLGSPNHRFHHWLVRQAIAALDNAQVSAQAIESIEKTYFDGGKIAPDSQRGVNTYNYFKSTLERELLKIKFNLARFNATNLLNNSEDFQITEAEIIVKLDAIEKIIAKYRFSEDLVEVDSQSSAEINNISPKRSNFFNIQRDLSAQDEQKILQNLRNLRLQRRIATRFLIVLIFIPLTVQILTKNLVFAPLVQHFRVDIVAWEKIHYQEETIEHYFEEFARYKETLEIKQLLSENQPLNQEKIHQELKKKAEELIRQAATNSQQGIVNLLADIAGLVAFVVLIIVFRGKSIITQQYLSQSFLALNDITKVFIFILLTDMFVGFHSAHGWEVVLENLTSHFGLPENRHAVYIFIATVPVFLDSLFKLLIFNYFTRQSPTSVAILEKMQQ.

4 helical membrane-spanning segments follow: residues 173–193 (FLIV…NLVF), 271–291 (IVNL…IIVF), 306–326 (FLAL…DMFV), and 354–374 (VYIF…LLIF).

The protein belongs to the CemA family. PxcL subfamily.

The protein localises to the cell inner membrane. Its function is as follows. Together with PxcA, contributes to transient H(+) uptake following dark to light transition. Required for H(+) influx to activate the Calvin-Benson-Bassham cycle. May also be involved in CO(2) transport. This is PxcA-like protein from Synechocystis sp. (strain ATCC 27184 / PCC 6803 / Kazusa).